The primary structure comprises 471 residues: tRNA-2-methylthio-N(6)-dimethylallyladenosine synthase (471 aa).

The 119-residue stretch at 31–149 (LYYHIETYGC…FPQLLWEALN (119 aa)) folds into the MTTase N-terminal domain. [4Fe-4S] cluster-binding residues include Cys40, Cys76, Cys110, Cys186, Cys190, and Cys193. Residues 172–402 (RDSNLKAWVN…IELQNKISLE (231 aa)) form the Radical SAM core domain. Positions 405-468 (AELRGKIVEV…AWTMQGELVE (64 aa)) constitute a TRAM domain.

Belongs to the methylthiotransferase family. MiaB subfamily. In terms of assembly, monomer. The cofactor is [4Fe-4S] cluster.

It localises to the cytoplasm. It carries out the reaction N(6)-dimethylallyladenosine(37) in tRNA + (sulfur carrier)-SH + AH2 + 2 S-adenosyl-L-methionine = 2-methylsulfanyl-N(6)-dimethylallyladenosine(37) in tRNA + (sulfur carrier)-H + 5'-deoxyadenosine + L-methionine + A + S-adenosyl-L-homocysteine + 2 H(+). Catalyzes the methylthiolation of N6-(dimethylallyl)adenosine (i(6)A), leading to the formation of 2-methylthio-N6-(dimethylallyl)adenosine (ms(2)i(6)A) at position 37 in tRNAs that read codons beginning with uridine. This chain is tRNA-2-methylthio-N(6)-dimethylallyladenosine synthase, found in Thermoanaerobacter sp. (strain X514).